Reading from the N-terminus, the 209-residue chain is NADH-quinone oxidoreductase subunit C (209 aa).

This sequence belongs to the complex I 30 kDa subunit family. As to quaternary structure, NDH-1 is composed of 14 different subunits. Subunits NuoB, C, D, E, F, and G constitute the peripheral sector of the complex.

Its subcellular location is the cell inner membrane. The enzyme catalyses a quinone + NADH + 5 H(+)(in) = a quinol + NAD(+) + 4 H(+)(out). In terms of biological role, NDH-1 shuttles electrons from NADH, via FMN and iron-sulfur (Fe-S) centers, to quinones in the respiratory chain. The immediate electron acceptor for the enzyme in this species is believed to be ubiquinone. Couples the redox reaction to proton translocation (for every two electrons transferred, four hydrogen ions are translocated across the cytoplasmic membrane), and thus conserves the redox energy in a proton gradient. In Bordetella petrii (strain ATCC BAA-461 / DSM 12804 / CCUG 43448), this protein is NADH-quinone oxidoreductase subunit C.